Reading from the N-terminus, the 459-residue chain is Putrescine aminotransferase (459 aa).

Residues 150–151 (GT) and glutamine 274 each bind pyridoxal 5'-phosphate. N6-(pyridoxal phosphate)lysine is present on lysine 300. Threonine 332 is a binding site for pyridoxal 5'-phosphate.

The protein belongs to the class-III pyridoxal-phosphate-dependent aminotransferase family. Putrescine aminotransferase subfamily. Pyridoxal 5'-phosphate is required as a cofactor.

The enzyme catalyses an alkane-alpha,omega-diamine + 2-oxoglutarate = an omega-aminoaldehyde + L-glutamate. It carries out the reaction putrescine + 2-oxoglutarate = 1-pyrroline + L-glutamate + H2O. It catalyses the reaction cadaverine + 2-oxoglutarate = 5-aminopentanal + L-glutamate. The protein operates within amine and polyamine degradation; putrescine degradation; 4-aminobutanal from putrescine (transaminase route): step 1/1. Functionally, catalyzes the aminotransferase reaction from putrescine to 2-oxoglutarate, leading to glutamate and 4-aminobutanal, which spontaneously cyclizes to form 1-pyrroline. This is the first step in one of two pathways for putrescine degradation, where putrescine is converted into 4-aminobutanoate (gamma-aminobutyrate or GABA) via 4-aminobutanal. Also functions as a cadaverine transaminase in a a L-lysine degradation pathway to succinate that proceeds via cadaverine, glutarate and L-2-hydroxyglutarate. The chain is Putrescine aminotransferase from Escherichia coli (strain SMS-3-5 / SECEC).